The chain runs to 150 residues: Large ribosomal subunit protein bL9 (150 aa).

It belongs to the bacterial ribosomal protein bL9 family.

Binds to the 23S rRNA. This is Large ribosomal subunit protein bL9 from Shewanella putrefaciens (strain CN-32 / ATCC BAA-453).